Here is a 160-residue protein sequence, read N- to C-terminus: Transcription elongation factor GreA (160 aa).

Positions 49–77 form a coiled coil; the sequence is SEYQSAKDEQAFVEGRIQTLKNMIDNAEI.

Belongs to the GreA/GreB family.

In terms of biological role, necessary for efficient RNA polymerase transcription elongation past template-encoded arresting sites. The arresting sites in DNA have the property of trapping a certain fraction of elongating RNA polymerases that pass through, resulting in locked ternary complexes. Cleavage of the nascent transcript by cleavage factors such as GreA or GreB allows the resumption of elongation from the new 3'terminus. GreA releases sequences of 2 to 3 nucleotides. In Leuconostoc mesenteroides subsp. mesenteroides (strain ATCC 8293 / DSM 20343 / BCRC 11652 / CCM 1803 / JCM 6124 / NCDO 523 / NBRC 100496 / NCIMB 8023 / NCTC 12954 / NRRL B-1118 / 37Y), this protein is Transcription elongation factor GreA.